We begin with the raw amino-acid sequence, 317 residues long: D-alanine--D-alanine ligase (317 aa).

One can recognise an ATP-grasp domain in the interval 103–299 (KHIFHSLNID…FNELVKIIVE (197 aa)). 130 to 183 (KVDYPYVLKPINEGSSIGVHMIFSHEDYLELKNNSSTIMEKMIIEEYIPGIELH) lines the ATP pocket. Positions 251, 265, and 267 each coordinate Mg(2+).

The protein belongs to the D-alanine--D-alanine ligase family. It depends on Mg(2+) as a cofactor. Mn(2+) serves as cofactor.

Its subcellular location is the cytoplasm. The enzyme catalyses 2 D-alanine + ATP = D-alanyl-D-alanine + ADP + phosphate + H(+). The protein operates within cell wall biogenesis; peptidoglycan biosynthesis. Functionally, cell wall formation. The polypeptide is D-alanine--D-alanine ligase (Wolbachia pipientis subsp. Culex pipiens (strain wPip)).